Here is a 71-residue protein sequence, read N- to C-terminus: UPF0346 protein SSU05_1322 (71 aa).

The protein belongs to the UPF0346 family.

This chain is UPF0346 protein SSU05_1322, found in Streptococcus suis (strain 05ZYH33).